Consider the following 144-residue polypeptide: Large ribosomal subunit protein uL15 (144 aa).

Residues 1-49 form a disordered region; that stretch reads MIKLECLQDPSPRKRRTKLLGRGPSSGHGKTSSRGHKGDCSRSGYKRRF.

Belongs to the universal ribosomal protein uL15 family. As to quaternary structure, part of the 50S ribosomal subunit.

Its function is as follows. Binds to the 23S rRNA. The chain is Large ribosomal subunit protein uL15 from Chlamydia trachomatis serovar A (strain ATCC VR-571B / DSM 19440 / HAR-13).